A 212-amino-acid polypeptide reads, in one-letter code: uncharacterized protein (212 aa).

Pentapeptide repeat domains lie at 63-102, 103-142, and 143-182; these read VSFR…KMVG, MNVA…ALMQ, and SECS…RFEQ.

This is an uncharacterized protein from Bacillus subtilis (strain 168).